Reading from the N-terminus, the 95-residue chain is Aspartyl/glutamyl-tRNA(Asn/Gln) amidotransferase subunit C (95 aa).

It belongs to the GatC family. Heterotrimer of A, B and C subunits.

It catalyses the reaction L-glutamyl-tRNA(Gln) + L-glutamine + ATP + H2O = L-glutaminyl-tRNA(Gln) + L-glutamate + ADP + phosphate + H(+). The enzyme catalyses L-aspartyl-tRNA(Asn) + L-glutamine + ATP + H2O = L-asparaginyl-tRNA(Asn) + L-glutamate + ADP + phosphate + 2 H(+). In terms of biological role, allows the formation of correctly charged Asn-tRNA(Asn) or Gln-tRNA(Gln) through the transamidation of misacylated Asp-tRNA(Asn) or Glu-tRNA(Gln) in organisms which lack either or both of asparaginyl-tRNA or glutaminyl-tRNA synthetases. The reaction takes place in the presence of glutamine and ATP through an activated phospho-Asp-tRNA(Asn) or phospho-Glu-tRNA(Gln). This chain is Aspartyl/glutamyl-tRNA(Asn/Gln) amidotransferase subunit C, found in Xanthobacter autotrophicus (strain ATCC BAA-1158 / Py2).